Here is a 366-residue protein sequence, read N- to C-terminus: Glutamate 5-kinase (366 aa).

Residue Lys-17 participates in ATP binding. 3 residues coordinate substrate: Ser-57, Asp-144, and Asn-156. ATP is bound by residues 176–177 (SD) and 216–222 (TGGMVSK). The region spanning 278–356 (SGALTLDDGA…SDLPAEMRRP (79 aa)) is the PUA domain.

It belongs to the glutamate 5-kinase family.

Its subcellular location is the cytoplasm. It carries out the reaction L-glutamate + ATP = L-glutamyl 5-phosphate + ADP. The protein operates within amino-acid biosynthesis; L-proline biosynthesis; L-glutamate 5-semialdehyde from L-glutamate: step 1/2. Catalyzes the transfer of a phosphate group to glutamate to form L-glutamate 5-phosphate. This is Glutamate 5-kinase from Mycolicibacterium vanbaalenii (strain DSM 7251 / JCM 13017 / BCRC 16820 / KCTC 9966 / NRRL B-24157 / PYR-1) (Mycobacterium vanbaalenii).